The sequence spans 336 residues: Glycerol-3-phosphate dehydrogenase [NAD(P)+] (336 aa).

5 residues coordinate NADPH: Ser-14, Trp-15, Arg-35, Arg-36, and Lys-109. Sn-glycerol 3-phosphate-binding residues include Lys-109 and Gly-139. An NADPH-binding site is contributed by Ala-143. Residues Lys-194, Asp-247, Ser-257, Arg-258, and Asn-259 each contribute to the sn-glycerol 3-phosphate site. The Proton acceptor role is filled by Lys-194. Arg-258 is a binding site for NADPH. Glu-284 lines the NADPH pocket.

This sequence belongs to the NAD-dependent glycerol-3-phosphate dehydrogenase family.

It localises to the cytoplasm. It carries out the reaction sn-glycerol 3-phosphate + NAD(+) = dihydroxyacetone phosphate + NADH + H(+). The catalysed reaction is sn-glycerol 3-phosphate + NADP(+) = dihydroxyacetone phosphate + NADPH + H(+). It participates in membrane lipid metabolism; glycerophospholipid metabolism. Functionally, catalyzes the reduction of the glycolytic intermediate dihydroxyacetone phosphate (DHAP) to sn-glycerol 3-phosphate (G3P), the key precursor for phospholipid synthesis. This is Glycerol-3-phosphate dehydrogenase [NAD(P)+] from Streptomyces coelicolor (strain ATCC BAA-471 / A3(2) / M145).